The sequence spans 325 residues: Zinc metalloproteinase/disintegrin (325 aa).

Positions K1–E39 are excised as a propeptide. The residue at position 40 (Q40) is a Pyrrolidone carboxylic acid. Residues R46–P242 form the Peptidase M12B domain. Residue H182 coordinates Zn(2+). E183 is an active-site residue. Zn(2+) is bound by residues H186 and H192. 2 cysteine pairs are disulfide-bonded: C197/C221 and C199/C204. A propeptide spanning residues L243–L257 is cleaved from the precursor. Positions T250–F322 constitute a Disintegrin domain. A Pyrrolidone carboxylic acid modification is found at Q258. 4 cysteine pairs are disulfide-bonded: C264–C287, C278–C284, C283–C308, and C296–C315. A Cell attachment site motif is present at residues R300–D302.

This sequence belongs to the venom metalloproteinase (M12B) family. P-II subfamily. P-IIe sub-subfamily. Heterodimer of bitisgabonin and gabonin-1 (bitisgabonin-1) or gabonin-2 (bitisgabonin-2); disulfide-linked. It depends on Zn(2+) as a cofactor. Expressed by the venom gland.

The protein localises to the secreted. Its function is as follows. Impairs hemostasis in the envenomed animal. Functionally, in dimer with gabonin-1 (bitisgabonin-1), is a potent inhibitor of the adhesion of the RGD-dependent integrin alpha-5/beta-1 (ITGA5/ITGB1) to immobilized fibronectin. In terms of biological role, in dimer with gabonin-2 (bitisgabonin-2), preferentially inhibits the adhesion of the alpha-4/beta-1 (ITGA4/ITGB1) and alpha-9/beta-1 (ITGA9/ITGB1) integrins to VCAM-1 and also acts as a strong antagonist of alpha-5/beta-1 (ITGA5/ITGB1). The sequence is that of Zinc metalloproteinase/disintegrin from Bitis gabonica (Gaboon adder).